We begin with the raw amino-acid sequence, 211 residues long: Histidine biosynthesis bifunctional protein HisIE (211 aa).

The tract at residues 1–122 (MSVKAAEVSS…DPQEESQMVW (122 aa)) is phosphoribosyl-AMP cyclohydrolase. Residues 123–211 (LHQLEQLLAA…VINKLKERHK (89 aa)) are phosphoribosyl-ATP pyrophosphohydrolase.

The protein in the N-terminal section; belongs to the PRA-CH family. It in the C-terminal section; belongs to the PRA-PH family.

It is found in the cytoplasm. The catalysed reaction is 1-(5-phospho-beta-D-ribosyl)-ATP + H2O = 1-(5-phospho-beta-D-ribosyl)-5'-AMP + diphosphate + H(+). The enzyme catalyses 1-(5-phospho-beta-D-ribosyl)-5'-AMP + H2O = 1-(5-phospho-beta-D-ribosyl)-5-[(5-phospho-beta-D-ribosylamino)methylideneamino]imidazole-4-carboxamide. Its pathway is amino-acid biosynthesis; L-histidine biosynthesis; L-histidine from 5-phospho-alpha-D-ribose 1-diphosphate: step 2/9. The protein operates within amino-acid biosynthesis; L-histidine biosynthesis; L-histidine from 5-phospho-alpha-D-ribose 1-diphosphate: step 3/9. This chain is Histidine biosynthesis bifunctional protein HisIE, found in Vibrio vulnificus (strain YJ016).